Here is a 477-residue protein sequence, read N- to C-terminus: MQVLHVCSEMFPLLKTGGLADVIGALPAAQIADGVDARVLLPAFPDIRRGVTDAQVVSRRDTFAGHITLLFGHYNGVGIYLIDAPHLYDRPGSPYHDTNLFAYTDNVLRFALLGWVGAEMASGLDPFWRPDVVHAHDWHAGLAPAYLAARGRPAKSVFTVHNLAYQGMFYAHHMNDIQLPWSFFNIHGLEFNGQISFLKAGLYYADHITAVSPTYAREITEPQFAYGMEGLLQQRHREGRLSGVLNGVDEKIWSPETDLLLASRYTRDTLEDKAKNKRQLQIAMGLKVDDKVPLFAVVSRLTSQKGLDLVLEALPGLLEQGGQLALLGAGDPVLQEGFLAAAAEYPGQVGVQIGYHEAFSHRIMGGADVILVPSRFEPCGLTQLYGLKYGTLPLVRRTGGLADTVSDCSLENLADGVASGFVFEDSNAWSLLRAIRRAFVLWSRPSLWRFVQRQAMAMDFSWQVAAKSYRELYYRLK.

Residue lysine 15 participates in ADP-alpha-D-glucose binding.

The protein belongs to the glycosyltransferase 1 family. Bacterial/plant glycogen synthase subfamily.

The enzyme catalyses [(1-&gt;4)-alpha-D-glucosyl](n) + ADP-alpha-D-glucose = [(1-&gt;4)-alpha-D-glucosyl](n+1) + ADP + H(+). It functions in the pathway glycan biosynthesis; glycogen biosynthesis. Its function is as follows. Synthesizes alpha-1,4-glucan chains using ADP-glucose. The sequence is that of Glycogen synthase from Shigella dysenteriae serotype 1 (strain Sd197).